Here is a 242-residue protein sequence, read N- to C-terminus: MTTVTMRDMLQAGVHFGHQTRYWNPKMKPFIFGARNGVHIINLEHTVPMFNEALAFISNVASKKGKVLFVGTKRAAGEAIKESALSCDQYYVDHRWLGGMLTNWKTVRQSIKRLKELESQSVDGTFDKLTKKEALMRTRELEKLEKSLGGIKNMGGLPDVLFVIGADHEHIAIKEANNLGIPVVAVVDTNSAPDGVNYIVPGNDDAMRAIRLYTSSVAAAANSGRGQDLAVQAEQDGFVEAV.

It belongs to the universal ribosomal protein uS2 family.

In Shewanella denitrificans (strain OS217 / ATCC BAA-1090 / DSM 15013), this protein is Small ribosomal subunit protein uS2.